A 1073-amino-acid polypeptide reads, in one-letter code: MPKRTDIKSILILGAGPIVIGQACEFDYSGAQACKALREEGYRVILVNSNPATIMTDPAMADATYIEPIKWATVAKIIEKERPDALLPTMGGQTALNCALDLERHGVLEKFGVEMIGANADTIDKAEDRSRFDKAMKDIGLACPRSGIAHSMEEAYGVLEQVGFPCIIRPSFTMGGTGGGIAYNREEFEEICARGLDLSPTNELLIDESLIGWKEYEMEVVRDKKDNCIIVCSIENFDPMGVHTGDSITVAPAQTLTDKEYQIMRNASLAVLREIGVETGGSNVQFGICPNTGRMVVIEMNPRVSRSSALASKATGFPIAKIAAKLAVGYTLDELQNDITGGRTPASFEPAIDYVVTKIPRFAFEKFPKADARLTTQMKSVGEVMAIGRTFQESVQKALRGLEVGATGFDPKLDLNDPEADSILKRELTVPSAERVWYVADAFRAGKSVEEVFELTRIDEWFLVQIEDLVKDEEKVKTLGLSSIDRELMYKLKRKGFSDARLAKLLGVTEKNLRSHRHKLKVLPVYKRVDTCAAEFATDTAYMYSTYEEECEANPSSREKIMILGGGPNRIGQGIEFDYCCVHAALAMREDGYETIMVNCNPETVSTDYDTSDRLYFEPVTLEDVLEIVRVEQPKGVIVQYGGQTPLKLCRALEEAGVPIIGTSPDAIDRAEDRERFQQMVQRLNLRQPANATARSEDEALAASKAIGYPLVVRPSYVLGGRAMEIVYQEEELKRYMREAVQVSNDSPVLLDHFLNCAIEVDIDAVCDGEIVVIGAIMQHIEQAGVHSGDSACSLPPYSLPQHIQDEIREQVKKMALELGVVGLMNVQMAVQGEDIFVIEVNPRASRTVPFVSKCVGESLAKVAARVMAGKTLAEVGFTQEIIPPFFSVKEAVFPFAKFPGVDPILGPEMKSTGEVMGVGDSFAEAFAKAQLGASEILPTAGCAFISVREDDKPFAAQVAGDLVALGFEVVATAGTARVIEAAGLPVRRVNKVTEGRPHVVDMIKNDEVTLIINTTEGRQSIADSYSIRRNALQHKICCTTTIAGGQAICEALKFGPEKTVRRLQDLHAGIKA.

Positions 2–403 are carboxyphosphate synthetic domain; the sequence is PKRTDIKSIL…SVQKALRGLE (402 aa). ATP-binding residues include Arg-129, Arg-169, Gly-175, Gly-176, Glu-208, Leu-210, Glu-215, Gly-241, Val-242, His-243, Gln-285, and Glu-299. Residues 133–328 form the ATP-grasp 1 domain; that stretch reads DKAMKDIGLA…IAKIAAKLAV (196 aa). Gln-285, Glu-299, and Asn-301 together coordinate Mg(2+). 3 residues coordinate Mn(2+): Gln-285, Glu-299, and Asn-301. The segment at 404 to 553 is oligomerization domain; that stretch reads VGATGFDPKL…YSTYEEECEA (150 aa). The tract at residues 554–935 is carbamoyl phosphate synthetic domain; the sequence is NPSSREKIMI…AFAKAQLGAS (382 aa). An ATP-grasp 2 domain is found at 678–869; the sequence is QQMVQRLNLR…LAKVAARVMA (192 aa). Arg-714, His-753, Leu-755, Glu-760, Gly-785, Val-786, His-787, Ser-788, Gln-828, and Glu-840 together coordinate ATP. 3 residues coordinate Mg(2+): Gln-828, Glu-840, and Asn-842. Mn(2+) contacts are provided by Gln-828, Glu-840, and Asn-842. The region spanning 936-1073 is the MGS-like domain; that stretch reads EILPTAGCAF…LQDLHAGIKA (138 aa). Residues 936 to 1073 are allosteric domain; sequence EILPTAGCAF…LQDLHAGIKA (138 aa).

Belongs to the CarB family. In terms of assembly, composed of two chains; the small (or glutamine) chain promotes the hydrolysis of glutamine to ammonia, which is used by the large (or ammonia) chain to synthesize carbamoyl phosphate. Tetramer of heterodimers (alpha,beta)4. Mg(2+) serves as cofactor. Requires Mn(2+) as cofactor.

The catalysed reaction is hydrogencarbonate + L-glutamine + 2 ATP + H2O = carbamoyl phosphate + L-glutamate + 2 ADP + phosphate + 2 H(+). The enzyme catalyses hydrogencarbonate + NH4(+) + 2 ATP = carbamoyl phosphate + 2 ADP + phosphate + 2 H(+). It participates in amino-acid biosynthesis; L-arginine biosynthesis; carbamoyl phosphate from bicarbonate: step 1/1. It functions in the pathway pyrimidine metabolism; UMP biosynthesis via de novo pathway; (S)-dihydroorotate from bicarbonate: step 1/3. Large subunit of the glutamine-dependent carbamoyl phosphate synthetase (CPSase). CPSase catalyzes the formation of carbamoyl phosphate from the ammonia moiety of glutamine, carbonate, and phosphate donated by ATP, constituting the first step of 2 biosynthetic pathways, one leading to arginine and/or urea and the other to pyrimidine nucleotides. The large subunit (synthetase) binds the substrates ammonia (free or transferred from glutamine from the small subunit), hydrogencarbonate and ATP and carries out an ATP-coupled ligase reaction, activating hydrogencarbonate by forming carboxy phosphate which reacts with ammonia to form carbamoyl phosphate. This is Carbamoyl phosphate synthase large chain from Pseudomonas aeruginosa (strain ATCC 15692 / DSM 22644 / CIP 104116 / JCM 14847 / LMG 12228 / 1C / PRS 101 / PAO1).